The primary structure comprises 1052 residues: RTX-III toxin determinant A from serotype 8 (1052 aa).

The next 3 membrane-spanning stretches (helical) occupy residues 248 to 265 (GLDI…SFAL), 275 to 334 (KVAA…LRVA), and 372 to 418 (DASI…GILE). 6 Hemolysin-type calcium-binding repeats span residues 744-761 (KGSK…DDLL), 762-779 (NGND…NDEL), 780-797 (RGDN…NDKL), 798-815 (LGGN…NDEL), 826-843 (RGGK…SDLL), and 844-861 (DGGE…SDFY).

It belongs to the RTX prokaryotic toxin (TC 1.C.11) family. Post-translationally, palmitoylated by ApxIIIC. The toxin only becomes active when modified.

The protein resides in the secreted. It is found in the host cell membrane. In terms of biological role, does not have hemolytic activity but shows a strong cytotoxicity towards alveolar macrophages and neutrophils. In Actinobacillus pleuropneumoniae (Haemophilus pleuropneumoniae), this protein is RTX-III toxin determinant A from serotype 8 (apxIIIA).